The primary structure comprises 417 residues: Voltage-gated ClC-type chloride channel ClcB (417 aa).

The next 11 helical transmembrane spans lie at 5–25 (LLIA…FRHA), 54–74 (LITP…WQKM), 146–166 (LWIA…PLAG), 168–188 (LFIA…PVVI), 190–210 (AVVA…LYTV), 222–242 (AMII…MWLM), 258–278 (WQLA…PAVW), 288–308 (FLLS…KLLA), 316–336 (GAPG…GMLY), 339–359 (MWGF…LTGM), and 380–400 (MTGE…ASVL).

This sequence belongs to the chloride channel (TC 2.A.49) family. ClcB subfamily.

It is found in the cell inner membrane. Its function is as follows. Probably acts as an electrical shunt for an outwardly-directed proton pump that is linked to amino acid decarboxylation, as part of the extreme acid resistance (XAR) response. This is Voltage-gated ClC-type chloride channel ClcB from Citrobacter koseri (strain ATCC BAA-895 / CDC 4225-83 / SGSC4696).